The chain runs to 431 residues: MQVRHFSSCRIVQAGKERFVPSSGTYPKGFKVGGFFTGVKKNAFNMDLAMLSSDKPCNAAAVFTTNVFKAAPVQVDRKILDVTQGKGIKTVVVNSGCANAVTGEGGIHDAQQMVKKADQVFGSESDLPASLVMSTGVIGQRLKIDKILKGIEEHAPAMKDDHEAWLNTAKGICTTDTFPKLMSQQFKIGDNTYTIAGLTKGAGMIHPRMATLLGFFATDAPVSASALGVALKHAADRSFNAISVDGDTSTNDTIVCLANGAAGGPEITETSASFPVFQDILTDFSSRLSQLVVRDGEGATKFVKISVNDAVSEQEAAKVAETVACSPLVKTALYGKDANWGRILCAVGYSGMQVEPTKTTVSFMPTDGSSELKLLVNGEPEQVDEARASEILDMEDLEIQINLGTGGGKNANFWTCDFSHEYVTINGDYRT.

The substrate site is built by threonine 174, lysine 200, threonine 211, glutamate 297, asparagine 426, and threonine 431. Threonine 211 functions as the Nucleophile in the catalytic mechanism.

Belongs to the ArgJ family. Heterodimer of an alpha and a beta chain. Post-translationally, the alpha and beta chains are autoproteolytically processed from a single precursor protein within the mitochondrion.

It localises to the mitochondrion matrix. The catalysed reaction is N(2)-acetyl-L-ornithine + L-glutamate = N-acetyl-L-glutamate + L-ornithine. It carries out the reaction L-glutamate + acetyl-CoA = N-acetyl-L-glutamate + CoA + H(+). Its pathway is amino-acid biosynthesis; L-arginine biosynthesis; L-ornithine and N-acetyl-L-glutamate from L-glutamate and N(2)-acetyl-L-ornithine (cyclic): step 1/1. The protein operates within amino-acid biosynthesis; L-arginine biosynthesis; N(2)-acetyl-L-ornithine from L-glutamate: step 1/4. Its function is as follows. Catalyzes two activities which are involved in the cyclic version of arginine biosynthesis: the synthesis of acetylglutamate from glutamate and acetyl-CoA, and of ornithine by transacetylation between acetylornithine and glutamate. This Yarrowia lipolytica (strain CLIB 122 / E 150) (Yeast) protein is Arginine biosynthesis bifunctional protein ArgJ, mitochondrial.